Here is a 579-residue protein sequence, read N- to C-terminus: V-type ATP synthase alpha chain (579 aa).

227–234 (GGFGTGKT) contributes to the ATP binding site.

This sequence belongs to the ATPase alpha/beta chains family.

It catalyses the reaction ATP + H2O + 4 H(+)(in) = ADP + phosphate + 5 H(+)(out). In terms of biological role, produces ATP from ADP in the presence of a proton gradient across the membrane. The V-type alpha chain is a catalytic subunit. The protein is V-type ATP synthase alpha chain of Anaeromyxobacter sp. (strain K).